We begin with the raw amino-acid sequence, 130 residues long: Histone H2A type 1-F (130 aa).

Residues 1-22 form a disordered region; that stretch reads MSGRGKQGGKARAKAKTRSSRA. The residue at position 2 (Ser2) is a Phosphoserine; by RPS6KA5. Arg4 bears the Citrulline; alternate mark. Arg4 is subject to Symmetric dimethylarginine; by PRMT5; alternate. N6-(2-hydroxyisobutyryl)lysine; alternate is present on Lys6. The residue at position 6 (Lys6) is an N6-(beta-hydroxybutyryl)lysine; alternate. Positions 7–19 are enriched in basic residues; the sequence is QGGKARAKAKTRS. The residue at position 10 (Lys10) is an N6-(2-hydroxyisobutyryl)lysine. Position 10 is an N6-lactoyllysine; alternate (Lys10). N6-(2-hydroxyisobutyryl)lysine; alternate is present on Lys37. Lys37 bears the N6-(beta-hydroxybutyryl)lysine; alternate mark. Lys37 is subject to N6-crotonyllysine; alternate. N6-(2-hydroxyisobutyryl)lysine is present on residues Lys75, Lys76, and Lys96. Lys96 is modified (N6-glutaryllysine; alternate). At Gln105 the chain carries N5-methylglutamine. Lys119 carries the N6-(2-hydroxyisobutyryl)lysine; alternate modification. Residues Lys119 and Lys120 each carry the N6-crotonyllysine; alternate modification. Residues Lys119 and Lys120 each carry the N6-glutaryllysine; alternate modification. Lys120 is modified (N6-(beta-hydroxybutyryl)lysine; alternate). Residue Lys120 forms a Glycyl lysine isopeptide (Lys-Gly) (interchain with G-Cter in ubiquitin); alternate linkage. Thr121 is subject to Phosphothreonine; by DCAF1. Residue Lys126 is modified to N6-(beta-hydroxybutyryl)lysine; alternate. N6-crotonyllysine; alternate is present on Lys126. An N6-glutaryllysine; alternate modification is found at Lys126.

It belongs to the histone H2A family. The nucleosome is a histone octamer containing two molecules each of H2A, H2B, H3 and H4 assembled in one H3-H4 heterotetramer and two H2A-H2B heterodimers. The octamer wraps approximately 147 bp of DNA. Deiminated on Arg-4 in granulocytes upon calcium entry. In terms of processing, monoubiquitination of Lys-120 (H2AK119Ub) by RING1, TRIM37 and RNF2/RING2 complex gives a specific tag for epigenetic transcriptional repression and participates in X chromosome inactivation of female mammals. It is involved in the initiation of both imprinted and random X inactivation. Ubiquitinated H2A is enriched in inactive X chromosome chromatin. Ubiquitination of H2A functions downstream of methylation of 'Lys-27' of histone H3 (H3K27me). H2AK119Ub by RNF2/RING2 can also be induced by ultraviolet and may be involved in DNA repair. Following DNA double-strand breaks (DSBs), it is ubiquitinated through 'Lys-63' linkage of ubiquitin moieties by the E2 ligase UBE2N and the E3 ligases RNF8 and RNF168, leading to the recruitment of repair proteins to sites of DNA damage. Ubiquitination at Lys-14 and Lys-16 (H2AK13Ub and H2AK15Ub, respectively) in response to DNA damage is initiated by RNF168 that mediates monoubiquitination at these 2 sites, and 'Lys-63'-linked ubiquitin are then conjugated to monoubiquitin; RNF8 is able to extend 'Lys-63'-linked ubiquitin chains in vitro. H2AK119Ub and ionizing radiation-induced 'Lys-63'-linked ubiquitination (H2AK13Ub and H2AK15Ub) are distinct events. Post-translationally, phosphorylation on Ser-2 (H2AS1ph) is enhanced during mitosis. Phosphorylation on Ser-2 by RPS6KA5/MSK1 directly represses transcription. Acetylation of H3 inhibits Ser-2 phosphorylation by RPS6KA5/MSK1. Phosphorylation at Thr-121 (H2AT120ph) by DCAF1 is present in the regulatory region of many tumor suppresor genes and down-regulates their transcription. Symmetric dimethylation on Arg-4 by the PRDM1/PRMT5 complex may play a crucial role in the germ-cell lineage. In terms of processing, glutamine methylation at Gln-105 (H2AQ104me) by FBL is specifically dedicated to polymerase I. It is present at 35S ribosomal DNA locus and impairs binding of the FACT complex. Post-translationally, crotonylation (Kcr) is specifically present in male germ cells and marks testis-specific genes in post-meiotic cells, including X-linked genes that escape sex chromosome inactivation in haploid cells. Crotonylation marks active promoters and enhancers and confers resistance to transcriptional repressors. It is also associated with post-meiotically activated genes on autosomes. Hydroxybutyrylation of histones is induced by starvation. In terms of processing, lactylated in macrophages by EP300/P300 by using lactoyl-CoA directly derived from endogenous or exogenous lactate, leading to stimulates gene transcription.

The protein resides in the nucleus. Its subcellular location is the chromosome. In terms of biological role, core component of nucleosome. Nucleosomes wrap and compact DNA into chromatin, limiting DNA accessibility to the cellular machineries which require DNA as a template. Histones thereby play a central role in transcription regulation, DNA repair, DNA replication and chromosomal stability. DNA accessibility is regulated via a complex set of post-translational modifications of histones, also called histone code, and nucleosome remodeling. This chain is Histone H2A type 1-F (Hist1h2af), found in Mus musculus (Mouse).